We begin with the raw amino-acid sequence, 546 residues long: 2-isopropylmalate synthase (546 aa).

The region spanning 8–271 is the Pyruvate carboxyltransferase domain; the sequence is ILIFDTTLRD…NSFFGRSSDS (264 aa). Positions 17, 208, 210, and 244 each coordinate Mn(2+). The tract at residues 408–546 is regulatory domain; it reads QLSHVQVSCG…EKKVFSNPKN (139 aa).

It belongs to the alpha-IPM synthase/homocitrate synthase family. LeuA type 1 subfamily. Homodimer. Mn(2+) serves as cofactor.

The protein resides in the cytoplasm. It carries out the reaction 3-methyl-2-oxobutanoate + acetyl-CoA + H2O = (2S)-2-isopropylmalate + CoA + H(+). Its pathway is amino-acid biosynthesis; L-leucine biosynthesis; L-leucine from 3-methyl-2-oxobutanoate: step 1/4. Functionally, catalyzes the condensation of the acetyl group of acetyl-CoA with 3-methyl-2-oxobutanoate (2-ketoisovalerate) to form 3-carboxy-3-hydroxy-4-methylpentanoate (2-isopropylmalate). This chain is 2-isopropylmalate synthase, found in Prochlorococcus marinus (strain MIT 9515).